We begin with the raw amino-acid sequence, 89 residues long: Small ribosomal subunit protein uS15 (89 aa).

Belongs to the universal ribosomal protein uS15 family. As to quaternary structure, part of the 30S ribosomal subunit. Forms a bridge to the 50S subunit in the 70S ribosome, contacting the 23S rRNA.

In terms of biological role, one of the primary rRNA binding proteins, it binds directly to 16S rRNA where it helps nucleate assembly of the platform of the 30S subunit by binding and bridging several RNA helices of the 16S rRNA. Functionally, forms an intersubunit bridge (bridge B4) with the 23S rRNA of the 50S subunit in the ribosome. In Enterobacter sp. (strain 638), this protein is Small ribosomal subunit protein uS15.